The chain runs to 208 residues: Holliday junction resolvase RecU (208 aa).

A disordered region spans residues Met1–Gly30. Positions 87, 89, 102, and 121 each coordinate Mg(2+).

The protein belongs to the RecU family. It depends on Mg(2+) as a cofactor.

It localises to the cytoplasm. It carries out the reaction Endonucleolytic cleavage at a junction such as a reciprocal single-stranded crossover between two homologous DNA duplexes (Holliday junction).. Endonuclease that resolves Holliday junction intermediates in genetic recombination. Cleaves mobile four-strand junctions by introducing symmetrical nicks in paired strands. Promotes annealing of linear ssDNA with homologous dsDNA. Required for DNA repair, homologous recombination and chromosome segregation. This Staphylococcus saprophyticus subsp. saprophyticus (strain ATCC 15305 / DSM 20229 / NCIMB 8711 / NCTC 7292 / S-41) protein is Holliday junction resolvase RecU.